Consider the following 97-residue polypeptide: Putative pterin-4-alpha-carbinolamine dehydratase (97 aa).

Belongs to the pterin-4-alpha-carbinolamine dehydratase family.

The enzyme catalyses (4aS,6R)-4a-hydroxy-L-erythro-5,6,7,8-tetrahydrobiopterin = (6R)-L-erythro-6,7-dihydrobiopterin + H2O. The chain is Putative pterin-4-alpha-carbinolamine dehydratase from Rhizorhabdus wittichii (strain DSM 6014 / CCUG 31198 / JCM 15750 / NBRC 105917 / EY 4224 / RW1) (Sphingomonas wittichii).